A 488-amino-acid chain; its full sequence is BRAP2 RING ZnF UBP domain-containing protein 1 (488 aa).

The RING-type; degenerate zinc-finger motif lies at 174–214; that stretch reads CPICLERLDPDTSGIVSTLCDHSFQCSCTSKWTYLSCQVCR. The UBP-type; degenerate zinc-finger motif lies at 208 to 301; that stretch reads LSCQVCRLCQ…GKSVEMSTSC (94 aa). Zn(2+) is bound by residues Cys225, Cys228, Cys237, Cys240, Cys245, His252, His256, and His262. Positions 370–418 form a coiled coil; that stretch reads EQIVVNTMQELQNKIEKCEEEKSGITEVNTKLIKEQDTWRKKAKEIEER. A disordered region spans residues 453–488; that stretch reads MSSDTDGIREGTVLPVPISPEPVSSVRRQKKSNRRK. Low complexity predominate over residues 465–478; sequence VLPVPISPEPVSSV. The segment covering 479–488 has biased composition (basic residues); that stretch reads RRQKKSNRRK.

Component of the heteromeric E3 ligase complex made of BRIZ1 and BRIZ2. Forms heterooligomers with BRIZ2 via coiled-coil domains.

The catalysed reaction is S-ubiquitinyl-[E2 ubiquitin-conjugating enzyme]-L-cysteine + [acceptor protein]-L-lysine = [E2 ubiquitin-conjugating enzyme]-L-cysteine + N(6)-ubiquitinyl-[acceptor protein]-L-lysine.. The protein operates within protein modification; protein ubiquitination. In terms of biological role, RING-type ubiquitin E3 ligase required for seed germination and post-germination growth. In Arabidopsis thaliana (Mouse-ear cress), this protein is BRAP2 RING ZnF UBP domain-containing protein 1.